Here is a 212-residue protein sequence, read N- to C-terminus: MKRGLLVSLEGPDGAGKSSVLEALVPILEAQGHQVVTTREPGGVPISEAIREVILDQNNTEMDGKTELLLYIASRRQHLIEKVLPALEAGKLVIMDRFIDSSVAYQGFGRGLDVADIEWLNQYATDGLKPDLTLYFDLDVEEGLARIAKNKNREVNRLDLEGLEMHQRVRQGYLYSLEKDPERLVKIDASQALEDVVKDSLAVLNQHLNSKS.

ATP is bound at residue 11–18; sequence GPDGAGKS.

Belongs to the thymidylate kinase family.

The catalysed reaction is dTMP + ATP = dTDP + ADP. Phosphorylation of dTMP to form dTDP in both de novo and salvage pathways of dTTP synthesis. The sequence is that of Thymidylate kinase from Streptococcus gordonii (strain Challis / ATCC 35105 / BCRC 15272 / CH1 / DL1 / V288).